A 580-amino-acid chain; its full sequence is Putative Xaa-Pro dipeptidyl-peptidase (580 aa).

Residues Ser207, Asp319, and His350 each act as charge relay system in the active site.

The protein belongs to the peptidase S15 family.

It catalyses the reaction Hydrolyzes Xaa-Pro-|- bonds to release unblocked, N-terminal dipeptides from substrates including Ala-Pro-|-p-nitroanilide and (sequentially) Tyr-Pro-|-Phe-Pro-|-Gly-Pro-|-Ile.. The chain is Putative Xaa-Pro dipeptidyl-peptidase from Bacillus cereus (strain ATCC 14579 / DSM 31 / CCUG 7414 / JCM 2152 / NBRC 15305 / NCIMB 9373 / NCTC 2599 / NRRL B-3711).